A 305-amino-acid polypeptide reads, in one-letter code: NAD kinase 2 (305 aa).

Asp-78 serves as the catalytic Proton acceptor. NAD(+)-binding positions include 78–79 (DG), 152–153 (NE), Asp-182, 193–198 (TAYSLS), and Asn-251.

It belongs to the NAD kinase family. Requires a divalent metal cation as cofactor.

The protein resides in the cytoplasm. The catalysed reaction is NAD(+) + ATP = ADP + NADP(+) + H(+). Its function is as follows. Involved in the regulation of the intracellular balance of NAD and NADP, and is a key enzyme in the biosynthesis of NADP. Catalyzes specifically the phosphorylation on 2'-hydroxyl of the adenosine moiety of NAD to yield NADP. In Synechococcus sp. (strain ATCC 27144 / PCC 6301 / SAUG 1402/1) (Anacystis nidulans), this protein is NAD kinase 2.